We begin with the raw amino-acid sequence, 435 residues long: 3-phosphoshikimate 1-carboxyvinyltransferase (435 aa).

Lys-21, Ser-22, and Arg-26 together coordinate 3-phosphoshikimate. Lys-21 serves as a coordination point for phosphoenolpyruvate. Phosphoenolpyruvate is bound by residues Gly-100 and Arg-128. 3-phosphoshikimate is bound by residues Ser-171, Ser-172, Gln-173, Ser-199, Asp-313, and Lys-340. Gln-173 is a phosphoenolpyruvate binding site. The active-site Proton acceptor is Asp-313. Positions 344, 386, and 412 each coordinate phosphoenolpyruvate.

The protein belongs to the EPSP synthase family. Monomer.

It localises to the cytoplasm. It catalyses the reaction 3-phosphoshikimate + phosphoenolpyruvate = 5-O-(1-carboxyvinyl)-3-phosphoshikimate + phosphate. The protein operates within metabolic intermediate biosynthesis; chorismate biosynthesis; chorismate from D-erythrose 4-phosphate and phosphoenolpyruvate: step 6/7. Its function is as follows. Catalyzes the transfer of the enolpyruvyl moiety of phosphoenolpyruvate (PEP) to the 5-hydroxyl of shikimate-3-phosphate (S3P) to produce enolpyruvyl shikimate-3-phosphate and inorganic phosphate. This is 3-phosphoshikimate 1-carboxyvinyltransferase from Clostridium novyi (strain NT).